The primary structure comprises 336 residues: Glyceraldehyde-3-phosphate dehydrogenase (336 aa).

NAD(+) is bound by residues 12–13, Asp34, Arg78, and Thr121; that span reads RI. D-glyceraldehyde 3-phosphate-binding positions include 151–153, Thr182, Arg199, 212–213, and Arg235; these read SCT and TG. The active-site Nucleophile is the Cys152. Asn316 contacts NAD(+).

It belongs to the glyceraldehyde-3-phosphate dehydrogenase family. As to quaternary structure, homotetramer.

The protein resides in the cytoplasm. The enzyme catalyses D-glyceraldehyde 3-phosphate + phosphate + NAD(+) = (2R)-3-phospho-glyceroyl phosphate + NADH + H(+). Its pathway is carbohydrate degradation; glycolysis; pyruvate from D-glyceraldehyde 3-phosphate: step 1/5. Functionally, catalyzes the oxidative phosphorylation of glyceraldehyde 3-phosphate (G3P) to 1,3-bisphosphoglycerate (BPG) using the cofactor NAD. The first reaction step involves the formation of a hemiacetal intermediate between G3P and a cysteine residue, and this hemiacetal intermediate is then oxidized to a thioester, with concomitant reduction of NAD to NADH. The reduced NADH is then exchanged with the second NAD, and the thioester is attacked by a nucleophilic inorganic phosphate to produce BPG. The polypeptide is Glyceraldehyde-3-phosphate dehydrogenase (gap) (Streptococcus dysgalactiae subsp. equisimilis (Streptococcus equisimilis)).